The chain runs to 412 residues: uncharacterized protein (412 aa).

His-49 is a Zn(2+) binding site. Glu-52 (proton acceptor) is an active-site residue. Positions 53 and 129 each coordinate Zn(2+).

This sequence belongs to the peptidase M16 family. Requires Zn(2+) as cofactor.

This is an uncharacterized protein from Rickettsia typhi (strain ATCC VR-144 / Wilmington).